Consider the following 411-residue polypeptide: Serine hydroxymethyltransferase (411 aa).

Residues L117 and 121–123 (GHL) contribute to the (6S)-5,6,7,8-tetrahydrofolate site. An N6-(pyridoxal phosphate)lysine modification is found at K226.

Belongs to the SHMT family. Homodimer. Pyridoxal 5'-phosphate serves as cofactor.

It localises to the cytoplasm. The enzyme catalyses (6R)-5,10-methylene-5,6,7,8-tetrahydrofolate + glycine + H2O = (6S)-5,6,7,8-tetrahydrofolate + L-serine. Its pathway is one-carbon metabolism; tetrahydrofolate interconversion. It functions in the pathway amino-acid biosynthesis; glycine biosynthesis; glycine from L-serine: step 1/1. Catalyzes the reversible interconversion of serine and glycine with tetrahydrofolate (THF) serving as the one-carbon carrier. This reaction serves as the major source of one-carbon groups required for the biosynthesis of purines, thymidylate, methionine, and other important biomolecules. Also exhibits THF-independent aldolase activity toward beta-hydroxyamino acids, producing glycine and aldehydes, via a retro-aldol mechanism. In Syntrophobacter fumaroxidans (strain DSM 10017 / MPOB), this protein is Serine hydroxymethyltransferase.